The primary structure comprises 214 residues: Glycerol-3-phosphate acyltransferase (214 aa).

5 consecutive transmembrane segments (helical) span residues 4-24 (LIVA…IVSA), 52-72 (AAIL…WFVV), 82-102 (ETSV…PVFF), 118-138 (LAIN…VAFF), and 159-179 (FLFG…LLVW).

The protein belongs to the PlsY family. In terms of assembly, probably interacts with PlsX.

Its subcellular location is the cell inner membrane. The catalysed reaction is an acyl phosphate + sn-glycerol 3-phosphate = a 1-acyl-sn-glycero-3-phosphate + phosphate. Its pathway is lipid metabolism; phospholipid metabolism. Its function is as follows. Catalyzes the transfer of an acyl group from acyl-phosphate (acyl-PO(4)) to glycerol-3-phosphate (G3P) to form lysophosphatidic acid (LPA). This enzyme utilizes acyl-phosphate as fatty acyl donor, but not acyl-CoA or acyl-ACP. This Paraburkholderia phytofirmans (strain DSM 17436 / LMG 22146 / PsJN) (Burkholderia phytofirmans) protein is Glycerol-3-phosphate acyltransferase.